A 218-amino-acid polypeptide reads, in one-letter code: Ribose-5-phosphate isomerase A (218 aa).

Residues 28-31 (TGST), 81-84 (DGAD), and 94-97 (KGGG) each bind substrate. The active-site Proton acceptor is Glu103. Lys121 contributes to the substrate binding site.

It belongs to the ribose 5-phosphate isomerase family. Homodimer.

The catalysed reaction is aldehydo-D-ribose 5-phosphate = D-ribulose 5-phosphate. It functions in the pathway carbohydrate degradation; pentose phosphate pathway; D-ribose 5-phosphate from D-ribulose 5-phosphate (non-oxidative stage): step 1/1. Catalyzes the reversible conversion of ribose-5-phosphate to ribulose 5-phosphate. The protein is Ribose-5-phosphate isomerase A of Sodalis glossinidius (strain morsitans).